The chain runs to 329 residues: tRNA (cytidine(32)/guanosine(34)-2'-O)-methyltransferase (329 aa).

Residues Gly53, Trp55, Asp75, Asp91, and Asp116 each contribute to the S-adenosyl-L-methionine site. Lys156 functions as the Proton acceptor in the catalytic mechanism. The tract at residues 221-240 (DFNQLDGPTRIIVPFVTCGD) is required for binding to WDR6. At Ser271 the chain carries Phosphoserine.

This sequence belongs to the class I-like SAM-binding methyltransferase superfamily. RNA methyltransferase RlmE family. TRM7 subfamily. In terms of assembly, interacts with WDR6; the interaction is direct, and required for 2'-O-methylation of position 34 in substrate tRNAs. In terms of tissue distribution, found in fetal brain, lung, liver and kidney. Widely expressed in adult tissue; with high expression in heart and liver, lower expression in skeletal muscle, kidney, and pancreas and also lowly expressed in brain and lung. In the adult brain, expressed in amygdala, caudate nucleus, corpus callosum, hippocampus and thalamus.

It is found in the cytoplasm. Its subcellular location is the nucleus. The enzyme catalyses cytidine(32)/guanosine(34) in tRNA + 2 S-adenosyl-L-methionine = 2'-O-methylcytidine(32)/2'-O-methylguanosine(34) in tRNA + 2 S-adenosyl-L-homocysteine + 2 H(+). Inhibited by 2,6-diaminopurine (DAP); inhibition promotes UGA stop-codon readthrough during translation by misincorporation of tRNA(Trp) in the nascent polypeptide. Its function is as follows. Methylates the 2'-O-ribose of nucleotides at positions 32 and 34 of the tRNA anticodon loop of substrate tRNAs. Requisite for faithful cytoplasmic translation. Requires THADA for methylation of the nucleotide at position 32 of the anticodon loop of substrate tRNAs. Requires WDR6 for methylation of the nucleotide at position 34 of the anticodon loop of substrate tRNAs. Promotes translation efficiency of the UUU codon. Plays a role in neurogenesis. Required for expression of genes involved in neurogenesis, mitochondrial translation and energy generation, and lipid biosynthesis. Requisite for RNA-mediated gene silencing. May modify position 32 in tRNA(Arg(ACG)), tRNA(Arg(CCG)), tRNA(Arg(UCG)), tRNA(Cys(GCA)), tRNA(Cys(ACA)), tRNA(Gln(CUG)), tRNA(Gln(UUG)), tRNA(Gly(CCC)), tRNA(Leu(CAG))/tRNA(Leu(CAA)), tRNA(Leu(A/IAG)), tRNA(Leu(UAG)), tRNA(Phe(GAA)), tRNA(Pro(AGG))/tRNA(Pro(CGG))/tRNA(Pro(UGG)) and tRNA(Trp(CCA)), and position 34 in tRNA(Phe(GAA)), tRNA(Leu(CAA)), tRNA(Sec(UCA)), and tRNA(Trp(CCA)). In Homo sapiens (Human), this protein is tRNA (cytidine(32)/guanosine(34)-2'-O)-methyltransferase.